Reading from the N-terminus, the 336-residue chain is Anthranilate phosphoribosyltransferase (336 aa).

Residues Gly82, 85 to 86 (GD), Thr90, 92 to 95 (NIST), 110 to 118 (KHGNRSVSS), and Ser122 contribute to the 5-phospho-alpha-D-ribose 1-diphosphate site. Residue Gly82 participates in anthranilate binding. Ser94 is a binding site for Mg(2+). Asn113 contributes to the anthranilate binding site. Residue Arg168 participates in anthranilate binding. Residues Asp227 and Glu228 each coordinate Mg(2+).

Belongs to the anthranilate phosphoribosyltransferase family. Homodimer. Mg(2+) is required as a cofactor.

It catalyses the reaction N-(5-phospho-beta-D-ribosyl)anthranilate + diphosphate = 5-phospho-alpha-D-ribose 1-diphosphate + anthranilate. It functions in the pathway amino-acid biosynthesis; L-tryptophan biosynthesis; L-tryptophan from chorismate: step 2/5. Catalyzes the transfer of the phosphoribosyl group of 5-phosphorylribose-1-pyrophosphate (PRPP) to anthranilate to yield N-(5'-phosphoribosyl)-anthranilate (PRA). The protein is Anthranilate phosphoribosyltransferase of Leptospira interrogans serogroup Icterohaemorrhagiae serovar copenhageni (strain Fiocruz L1-130).